A 175-amino-acid polypeptide reads, in one-letter code: Cytochrome c-type biogenesis protein CcmE (175 aa).

At 1-8 (MNAVRRKK) the chain is on the cytoplasmic side. Residues 9–29 (LIWVAATLAGAIIAVLLVIYA) form a helical; Signal-anchor for type II membrane protein membrane-spanning segment. The Periplasmic segment spans residues 30–175 (IGQQTDYYFD…GNHTTSTLQE (146 aa)). His-124 and Tyr-128 together coordinate heme. Residues 142–175 (AAKGVTPTSEQFSPAIPVKQTAGEGNHTTSTLQE) are disordered.

It belongs to the CcmE/CycJ family.

Its subcellular location is the cell inner membrane. Heme chaperone required for the biogenesis of c-type cytochromes. Transiently binds heme delivered by CcmC and transfers the heme to apo-cytochromes in a process facilitated by CcmF and CcmH. The sequence is that of Cytochrome c-type biogenesis protein CcmE from Psychrobacter sp. (strain PRwf-1).